The sequence spans 131 residues: Putative gamma-taxilin 2 (131 aa).

Belongs to the taxilin family.

The chain is Putative gamma-taxilin 2 (TXLNGY) from Pan troglodytes (Chimpanzee).